A 421-amino-acid chain; its full sequence is POU domain, class 4, transcription factor 1 (421 aa).

Residues 57–66 carry the POU-IV box motif; it reads RAEALAAVDI. Disordered regions lie at residues 94–117 and 133–200; these read STVP…GDLL and GAGA…GLGH. Basic residues predominate over residues 99–108; it reads AHHHHHHHHH. The span at 133–186 shows a compositional bias: gly residues; it reads GAGAAGGGGGAHDGPGGGGGPGGGGGPGGGGPGGGGGGGGPGGGGGGPGGGLLG. Residues 262-339 enclose the POU-specific domain; that stretch reads DSDTDPRELE…ILQAWLEEAE (78 aa). Positions 357–416 form a DNA-binding region, homeobox; that stretch reads KKRKRTSIAAPEKRSLEAYFAVQPRPSSEKIAAIAEKLDLKKNVVRVWFCNQRQKQKRMK.

It belongs to the POU transcription factor family. Class-4 subfamily. Interacts (via N-terminus) with RIT2; the interaction controls POU4F1 transactivation activity on some neuronal target genes. Isoform 1 interacts with POU4F2 isoform 2; this interaction inhibits both POU4F1 DNA-binding and transcriptional activities. Isoform 1 interacts (C-terminus) with ESR1 (via DNA-binding domain); this interaction decreases the estrogen receptor ESR1 transcriptional activity in a DNA- and ligand 17-beta-estradiol-independent manner. In terms of tissue distribution, expressed in mature osteoclasts (at protein level). Brain, peripheral sensory nervous system and retina. In the adult nervous system, predominates in the medial habenula, superficial gray of the superior colliculus, red nucleus, mesencephalic nucleus of the trigeminal ganglion, nucleus ambiguus, inferior olivary nucleus, and peripheral sensory ganglia.

It is found in the nucleus. Its subcellular location is the cytoplasm. In terms of biological role, multifunctional transcription factor with different regions mediating its different effects. Acts by binding (via its C-terminal domain) to sequences related to the consensus octamer motif 5'-ATGCAAAT-3' in the regulatory regions of its target genes. Regulates the expression of specific genes involved in differentiation and survival within a subset of neuronal lineages. It has been shown that activation of some of these genes requires its N-terminal domain, maybe through a neuronal-specific cofactor. Activates BCL2 expression and protects neuronal cells from apoptosis (via the N-terminal domain). Induces neuronal process outgrowth and the coordinate expression of genes encoding synaptic proteins. Exerts its major developmental effects in somatosensory neurons and in brainstem nuclei involved in motor control. Stimulates the binding affinity of the nuclear estrogene receptor ESR1 to DNA estrogen response element (ERE), and hence modulates ESR1-induced transcriptional activity. May positively regulate POU4F2 and POU4F3. Regulates dorsal root ganglion sensory neuron specification and axonal projection into the spinal cord. Plays a role in TNFSF11-mediated terminal osteoclast differentiation. Negatively regulates its own expression interacting directly with a highly conserved autoregulatory domain surrounding the transcription initiation site. Able to act as transcription factor, cannot regulate the expression of the same subset of genes than isoform 1. Does not have antiapoptotic effect on neuronal cells. The polypeptide is POU domain, class 4, transcription factor 1 (Pou4f1) (Mus musculus (Mouse)).